Reading from the N-terminus, the 290-residue chain is Ribosome-inactivating protein bryodin I (290 aa).

A signal peptide spans 1 to 23; the sequence is MIKLLVLWLLILTIFLKSPTVEG. Residues Glu183 and Glu212 contribute to the active site. 2 N-linked (GlcNAc...) asparagine glycosylation sites follow: Asn214 and Asn250. Positions 271-290 are cleaved as a propeptide — removed in mature form; the sequence is AIGEDISMTLIGFEHGLYGI.

Belongs to the ribosome-inactivating protein family. Type 1 RIP subfamily. Post-translationally, appears to undergo proteolytic cleavage in the C-terminal to produce a shorter protein.

The enzyme catalyses Endohydrolysis of the N-glycosidic bond at one specific adenosine on the 28S rRNA.. Ribosome-inactivating protein of type 1, inhibits protein synthesis in animal cells. The protein is Ribosome-inactivating protein bryodin I of Bryonia dioica (Red bryony).